A 783-amino-acid chain; its full sequence is LPS-assembly protein LptD (783 aa).

A signal peptide spans 1-24; it reads MSCFSRTFLAASISAALFAPQIQA.

This sequence belongs to the LptD family. In terms of assembly, component of the lipopolysaccharide transport and assembly complex. Interacts with LptE and LptA.

It is found in the cell outer membrane. Together with LptE, is involved in the assembly of lipopolysaccharide (LPS) at the surface of the outer membrane. This Vibrio cholerae serotype O1 (strain ATCC 39315 / El Tor Inaba N16961) protein is LPS-assembly protein LptD.